Here is a 360-residue protein sequence, read N- to C-terminus: Membrane-bound lytic murein transglycosylase C (360 aa).

The N-terminal stretch at 1-16 (MKKLLALAVIAPLLIS) is a signal peptide. Cys-17 is lipidated: N-palmitoyl cysteine. Cys-17 carries S-diacylglycerol cysteine lipidation.

The protein belongs to the transglycosylase Slt family.

The protein resides in the cell outer membrane. It carries out the reaction Exolytic cleavage of the (1-&gt;4)-beta-glycosidic linkage between N-acetylmuramic acid (MurNAc) and N-acetylglucosamine (GlcNAc) residues in peptidoglycan, from either the reducing or the non-reducing ends of the peptidoglycan chains, with concomitant formation of a 1,6-anhydrobond in the MurNAc residue.. Functionally, murein-degrading enzyme. May play a role in recycling of muropeptides during cell elongation and/or cell division. The sequence is that of Membrane-bound lytic murein transglycosylase C from Salmonella paratyphi A (strain ATCC 9150 / SARB42).